A 286-amino-acid chain; its full sequence is Homoserine kinase (286 aa).

Position 78-88 (78-88) interacts with ATP; that stretch reads PLARGLGSSSS.

This sequence belongs to the GHMP kinase family. Homoserine kinase subfamily.

It is found in the cytoplasm. It catalyses the reaction L-homoserine + ATP = O-phospho-L-homoserine + ADP + H(+). The protein operates within amino-acid biosynthesis; L-threonine biosynthesis; L-threonine from L-aspartate: step 4/5. Its function is as follows. Catalyzes the ATP-dependent phosphorylation of L-homoserine to L-homoserine phosphate. In Streptococcus thermophilus (strain CNRZ 1066), this protein is Homoserine kinase.